Reading from the N-terminus, the 1463-residue chain is Alpha-agarase (1463 aa).

The first 27 residues, 1-27 (MITSSKKIVSAMLSTSLWIGVASAAYA), serve as a signal peptide directing secretion. The propeptide occupies 28–684 (ETTNVEAEGY…PSTLSESIFT (657 aa)). Disordered regions lie at residues 166–191 (VTPE…PGTP) and 512–549 (TDDI…PQPG). A compositionally biased stretch (polar residues) spans 518–536 (CANTPSGETANATGCSSSQ). Residues 534–677 (SSQEGGGTDP…GGTNFVHPST (144 aa)) enclose the PA14 domain. The CBM6 domain occupies 701-832 (IIVELESFVF…QWSGDRVRFT (132 aa)).

The protein belongs to the glycosyl hydrolase 96 family. As to quaternary structure, monomer. The cofactor is Ca(2+).

The enzyme catalyses Endohydrolysis of 1,3-alpha-L-galactosidic linkages in agarose, yielding agarotetraose as the major product.. Alpha-agarase. Hydrolyzes agarose, agarohexaose, neoagarohexaose and porphyran. Hydrolysis of porphyran by this enzyme improves its antioxidant activity. Does not hydrolyze kappa-carrageenan, iota-carrageenen or lambda-carrageenan. In Thalassotalea agarivorans (Thalassomonas agarivorans), this protein is Alpha-agarase.